The chain runs to 273 residues: Putative pyruvate, phosphate dikinase regulatory protein (273 aa).

153–160 is an ADP binding site; it reads GVSRTSKT.

The protein belongs to the pyruvate, phosphate/water dikinase regulatory protein family. PDRP subfamily.

It catalyses the reaction N(tele)-phospho-L-histidyl/L-threonyl-[pyruvate, phosphate dikinase] + ADP = N(tele)-phospho-L-histidyl/O-phospho-L-threonyl-[pyruvate, phosphate dikinase] + AMP + H(+). The catalysed reaction is N(tele)-phospho-L-histidyl/O-phospho-L-threonyl-[pyruvate, phosphate dikinase] + phosphate + H(+) = N(tele)-phospho-L-histidyl/L-threonyl-[pyruvate, phosphate dikinase] + diphosphate. Bifunctional serine/threonine kinase and phosphorylase involved in the regulation of the pyruvate, phosphate dikinase (PPDK) by catalyzing its phosphorylation/dephosphorylation. The polypeptide is Putative pyruvate, phosphate dikinase regulatory protein (Sinorhizobium fredii (strain NBRC 101917 / NGR234)).